A 187-amino-acid chain; its full sequence is Large ribosomal subunit protein uL6 (187 aa).

The disordered stretch occupies residues 159-187 (PYKGKGIRYKGEQLSSNPERLQVRSKEVR).

It belongs to the universal ribosomal protein uL6 family. Part of the 50S ribosomal subunit.

This protein binds to the 23S rRNA, and is important in its secondary structure. It is located near the subunit interface in the base of the L7/L12 stalk, and near the tRNA binding site of the peptidyltransferase center. The sequence is that of Large ribosomal subunit protein uL6 from Aquifex pyrophilus.